A 147-amino-acid polypeptide reads, in one-letter code: Ubiquitin-conjugating enzyme E2 5A (147 aa).

Positions 1–15 are enriched in basic and acidic residues; that stretch reads MASKRIQKELKDLQK. The tract at residues 1-24 is disordered; sequence MASKRIQKELKDLQKDPPTSCSAG. A UBC core domain is found at 1 to 147; it reads MASKRIQKEL…ARTWTQRYAM (147 aa). C85 acts as the Glycyl thioester intermediate in catalysis.

It belongs to the ubiquitin-conjugating enzyme family.

The catalysed reaction is S-ubiquitinyl-[E1 ubiquitin-activating enzyme]-L-cysteine + [E2 ubiquitin-conjugating enzyme]-L-cysteine = [E1 ubiquitin-activating enzyme]-L-cysteine + S-ubiquitinyl-[E2 ubiquitin-conjugating enzyme]-L-cysteine.. It participates in protein modification; protein ubiquitination. Functionally, E2 conjugating enzyme that associates with the E3 ubiquitin-protein ligase EL5 to mediate ubiquitination of target proteins. The chain is Ubiquitin-conjugating enzyme E2 5A (UBC5A) from Oryza sativa subsp. japonica (Rice).